A 489-amino-acid chain; its full sequence is MKYRDLRDFIQLLEQRGQLKRIKQEIDPYLEMTEIADRTLRAQGPALLFENPKGSRYPVLANLFGTPQRVAWGMGQEDVSALRDVGEWMAMLKEPEPPKGLRDLFDKLPLFKQILNMPVKRLSKAPCQDIILTGDDVDLNQLPVQHCWPGDVAPLVTWGLTITKGPYKKRQNLGIYRQQLLAKNKLIMRWLDHRGGAIDFREWQEAHPGEPFPVVVAIGADPATILGAVTPVPDTLSEYAFAGLLRQSRTEVVKALSCDLDVPASAEIVLEGYLMPGETAPEGPYGDHTGYYNEVDDFSVFTITHMTMRKDAIYHSTYTGRPPDEPAMLGVALNEVFVPLVRKQFPEIVDFYLPPEGCSYRMAVVTIKKRYPGHAKRVMMGVWSFLRQFMYTKFVIVCDEDVNARDWNDVIWAITTRMDPARDTTLIEHTPIDYLDFASPVAGLGSKMGLDATNKWPGETQREWGTPIHMDEAVKRRVDELWDSLGIFD.

Mn(2+) is bound at residue N172. Residues I175 to R177, R189 to L191, and R194 to G195 each bind prenylated FMN. Residue E238 participates in Mn(2+) binding. The Proton donor role is filled by D287.

It belongs to the UbiD family. In terms of assembly, homohexamer. The cofactor is prenylated FMN. Requires Mn(2+) as cofactor.

The protein resides in the cell membrane. It catalyses the reaction a 4-hydroxy-3-(all-trans-polyprenyl)benzoate + H(+) = a 2-(all-trans-polyprenyl)phenol + CO2. It functions in the pathway cofactor biosynthesis; ubiquinone biosynthesis. Functionally, catalyzes the decarboxylation of 3-octaprenyl-4-hydroxy benzoate to 2-octaprenylphenol, an intermediate step in ubiquinone biosynthesis. This Tolumonas auensis (strain DSM 9187 / NBRC 110442 / TA 4) protein is 3-octaprenyl-4-hydroxybenzoate carboxy-lyase.